A 585-amino-acid polypeptide reads, in one-letter code: Protein FAM83D (585 aa).

Positions 1-296 are DUF1669; it reads MAARFELLDD…LYAQSEPISS (296 aa). Position 295 is a phosphoserine (serine 295). Disordered regions lie at residues 334–411 and 425–482; these read LSST…TSSS and AASS…SQGS. The tract at residues 337–585 is required for interaction with KIF22 and function in chromosome congression; sequence TPRKSNLGPE…RDIALYPPYQ (249 aa). 2 stretches are compositionally biased toward basic and acidic residues: residues 347–360 and 369–383; these read EPPKDRAKPKRPDS and DYFHSHKDQLEDSKV. Over residues 425–441 the composition is skewed to polar residues; that stretch reads AASSQATVWSKSTTTQT. At serine 458 the chain carries Phosphoserine. Residues 458–482 show a composition bias toward low complexity; it reads SPASKMSVSRSSSVRSSSSVSSQGS. Threonine 511 carries the phosphothreonine modification.

This sequence belongs to the FAM83 family. As to quaternary structure, interacts with FBXW7; promotes FBXW7 degradation. May interact with RAF1. Interacts with KIF22; recruits KIF22 to mitotic spindle microtubules. Interacts (via C-terminus) with DYNLL1. Interacts with HMMR. Directly interacts (via DUF1669) with CSNK1A1 and CSNK1A1L. Post-translationally, phosphorylated during mitosis.

The protein localises to the cytoplasm. It localises to the cytoskeleton. It is found in the spindle. The protein resides in the spindle pole. In terms of biological role, through the degradation of FBXW7, may act indirectly on the expression and downstream signaling of MTOR, JUN and MYC. May play also a role in cell proliferation through activation of the ERK1/ERK2 signaling cascade. May also be important for proper chromosome congression and alignment during mitosis through its interaction with KIF22. The sequence is that of Protein FAM83D from Mus musculus (Mouse).